Here is a 414-residue protein sequence, read N- to C-terminus: Putative competence-damage inducible protein (414 aa).

This sequence belongs to the CinA family.

This Moorella thermoacetica (strain ATCC 39073 / JCM 9320) protein is Putative competence-damage inducible protein.